Here is a 450-residue protein sequence, read N- to C-terminus: V-type proton ATPase subunit H (450 aa).

It belongs to the V-ATPase H subunit family. V-ATPase is a heteromultimeric enzyme composed of a peripheral catalytic V1 complex (components A to H) attached to an integral membrane V0 proton pore complex (components: a, c, c', c'', d, e, f and VOA1).

It localises to the vacuole membrane. Functionally, subunit of the V1 complex of vacuolar(H+)-ATPase (V-ATPase), a multisubunit enzyme composed of a peripheral complex (V1) that hydrolyzes ATP and a membrane integral complex (V0) that translocates protons. V-ATPase is responsible for acidifying and maintaining the pH of intracellular compartments. This subunit is essential for activity, but not assembly, of the enzyme complex. This subunit is also required for silencing the ATPase activity of V-ATPase when V1 is detached from V0. The chain is V-type proton ATPase subunit H (vma13) from Schizosaccharomyces pombe (strain 972 / ATCC 24843) (Fission yeast).